The following is a 436-amino-acid chain: Homeobox protein PKNOX1 (436 aa).

Residues 1 to 20 show a composition bias toward polar residues; that stretch reads MMATQTLSIDSYQDGQQMQV. Positions 1 to 49 are disordered; it reads MMATQTLSIDSYQDGQQMQVVTELKTEQDPNCSEPDAEGVSPPPVESQT. 2 positions are modified to phosphoserine: S33 and S41. The region spanning 80–163 is the MEIS N-terminal domain; sequence GSEGTTSASF…MNSETLLSGE (84 aa). Residues 259 to 321 constitute a DNA-binding region (homeobox; TALE-type); that stretch reads SKNKRGVLPK…NARRRILQPM (63 aa). The tract at residues 401–436 is disordered; it reads AGQSEDESVDSTEEDAGALAPAHISGLVLENSDSLQ. The span at 404 to 416 shows a compositional bias: acidic residues; sequence SEDESVDSTEEDA.

The protein belongs to the TALE/MEIS homeobox family. In terms of assembly, interacts with MN1. Ubiquitous. Isoform 2 is expressed in all examined tissues except in bone marrow.

The protein localises to the nucleus. Functionally, activates transcription in the presence of PBX1A and HOXA1. The chain is Homeobox protein PKNOX1 from Homo sapiens (Human).